A 98-amino-acid polypeptide reads, in one-letter code: Growth-regulated protein homolog gamma (98 aa).

An N-terminal signal peptide occupies residues 1-29 (MAPAASSAPRLLRAAMLLLLLVAAGRRAA). 2 disulfide bridges follow: Cys-39/Cys-65 and Cys-41/Cys-81.

This sequence belongs to the intercrine alpha (chemokine CxC) family.

The protein resides in the secreted. This is Growth-regulated protein homolog gamma from Bos taurus (Bovine).